A 737-amino-acid polypeptide reads, in one-letter code: Zinc finger protein 280C (737 aa).

Residues Lys-5, Lys-10, Lys-14, Lys-33, and Lys-55 each participate in a glycyl lysine isopeptide (Lys-Gly) (interchain with G-Cter in SUMO2) cross-link. A compositionally biased stretch (polar residues) spans 57 to 66 (AISNILNRGH). Residues 57-137 (AISNILNRGH…DFTKNSQVGS (81 aa)) form a disordered region. Lys-75 is covalently cross-linked (Glycyl lysine isopeptide (Lys-Gly) (interchain with G-Cter in SUMO2)). Ser-80 is modified (phosphoserine). A compositionally biased stretch (polar residues) spans 112–123 (SKSSQSSVTVEN). Glycyl lysine isopeptide (Lys-Gly) (interchain with G-Cter in SUMO2) cross-links involve residues Lys-113, Lys-126, Lys-167, Lys-174, Lys-180, and Lys-187. Positions 176–185 (PSTSKVNSVT) are enriched in polar residues. Residues 176-223 (PSTSKVNSVTPKKPKTSEDVPQINPSTSLPLIGSPPVTSSQVMLSKGT) are disordered. Residues 211–223 (PVTSSQVMLSKGT) show a composition bias toward polar residues. Thr-223 bears the Phosphothreonine mark. The residue at position 227 (Ser-227) is a Phosphoserine. Residue Lys-273 forms a Glycyl lysine isopeptide (Lys-Gly) (interchain with G-Cter in SUMO2) linkage. 5 consecutive C2H2-type zinc fingers follow at residues 316 to 338 (FKCF…MKHH), 353 to 376 (TTCQ…ESTH), 383 to 406 (TICK…KDTH), 413 to 436 (YVCQ…RAAH), and 470 to 492 (HRCP…KAQH). Lys-522 participates in a covalent cross-link: Glycyl lysine isopeptide (Lys-Gly) (interchain with G-Cter in SUMO2). Residues 535–579 (SFLQVTPPTSQNTTARNPRKSNASRSKTSKLHATTSTASKVNTSK) are compositionally biased toward polar residues. Residues 535-602 (SFLQVTPPTS…YKQKRQRNRK (68 aa)) are disordered. Phosphothreonine is present on Thr-540. Glycyl lysine isopeptide (Lys-Gly) (interchain with G-Cter in SUMO2) cross-links involve residues Lys-564 and Lys-574. Residues 580–602 (PRGRIAKSKAKPSYKQKRQRNRK) are compositionally biased toward basic residues.

It is found in the nucleus. Its function is as follows. May function as a transcription factor. The polypeptide is Zinc finger protein 280C (ZNF280C) (Homo sapiens (Human)).